Here is a 311-residue protein sequence, read N- to C-terminus: Large ribosomal subunit protein uL22 (311 aa).

This sequence belongs to the universal ribosomal protein uL22 family. As to quaternary structure, part of the 50S ribosomal subunit.

This protein binds specifically to 23S rRNA; its binding is stimulated by other ribosomal proteins, e.g. L4, L17, and L20. It is important during the early stages of 50S assembly. It makes multiple contacts with different domains of the 23S rRNA in the assembled 50S subunit and ribosome. Functionally, the globular domain of the protein is located near the polypeptide exit tunnel on the outside of the subunit, while an extended beta-hairpin is found that lines the wall of the exit tunnel in the center of the 70S ribosome. The polypeptide is Large ribosomal subunit protein uL22 (rplV) (Ureaplasma parvum serovar 3 (strain ATCC 27815 / 27 / NCTC 11736)).